A 202-amino-acid polypeptide reads, in one-letter code: uncharacterized protein (202 aa).

Residues 13–73 (ELAADRILDA…AYVHRETRRL (61 aa)) enclose the HTH tetR-type domain. The segment at residues 36 to 55 (GMNEIAKAAGCSRATLYRYF) is a DNA-binding region (H-T-H motif).

This is an uncharacterized protein from Mycobacterium tuberculosis (strain CDC 1551 / Oshkosh).